The sequence spans 361 residues: MATAASNPYSILSSTSLVHADSAGMQQGSPFRNPQKLLQSDYLQGVPSNGHPLGHHWVTSLSDGGPWSSTLATSPLDQQDVKPGREDLQLGAIIHHRSPHVAHHSPHTNHPNAWGASPAPNPSITSSGQPLNVYSQPGFTVSGMLEHGGLTPPPAAASAQSLHPVLREPPDHGELGSHHCQDHSDEETPTSDELEQFAKQFKQRRIKLGFTQADVGLALGTLYGNVFSQTTICRFEGLQLSFKNMCKLKPLLNKWLEEADSSTGSPTSIDKIAAQGRKRKKRTSIEVSVKGVLETHFLKCPKPAAQEISSLADSLQLEKEVVRVWFCNRRQKEKRMTPPGDQQPHEVYSHTVKTDTSCHDL.

2 disordered regions span residues 99-131 and 144-192; these read PHVAHHSPHTNHPNAWGASPAPNPSITSSGQPL and MLEH…PTSD. The span at 122 to 131 shows a compositional bias: polar residues; the sequence is PSITSSGQPL. Over residues 165-183 the composition is skewed to basic and acidic residues; it reads VLREPPDHGELGSHHCQDH. Positions 186 to 260 constitute a POU-specific domain; that stretch reads EETPTSDELE…LLNKWLEEAD (75 aa). The residue at position 265 (serine 265) is a Phosphoserine. A DNA-binding region (homeobox) is located at residues 278 to 337; that stretch reads KRKKRTSIEVSVKGVLETHFLKCPKPAAQEISSLADSLQLEKEVVRVWFCNRRQKEKRMT.

Belongs to the POU transcription factor family. Class-3 subfamily. In terms of assembly, interacts with HNRNPU. As to expression, brain specific.

It is found in the nucleus. Probable transcription factor which exert its primary action widely during early neural development and in a very limited set of neurons in the mature brain. The chain is POU domain, class 3, transcription factor 4 (POU3F4) from Homo sapiens (Human).